A 144-amino-acid chain; its full sequence is MHYKHILAAIDLSPRSQEVIDRAAEVAASNNATLDVVHVIEHSPVAYGGEFSIPINVNLEQTIESEARKALTELCHTVKVPSERQHTLSGVVKHMVIELAEKLNIDLIVVGTHGHHGLDKLLGSRANAILHVATCDVLAVWMKE.

Belongs to the universal stress protein A family. Homodimer.

It localises to the cytoplasm. Involved in stress response. This is Universal stress protein A homolog 1 (uspA1) from Coxiella burnetii (strain RSA 493 / Nine Mile phase I).